The chain runs to 169 residues: Superoxide dismutase [Cu-Zn] 1 (169 aa).

The N-terminal stretch at 1 to 18 is a signal peptide; sequence MFEQWDALCAVLFSFSIA. His65, His67, and His83 together coordinate Cu cation. An intrachain disulfide couples Cys72 to Cys165. 4 residues coordinate Zn(2+): His83, His91, His100, and Asp103. His145 is a binding site for Cu cation.

Belongs to the Cu-Zn superoxide dismutase family. Requires Cu cation as cofactor. Zn(2+) is required as a cofactor.

It catalyses the reaction 2 superoxide + 2 H(+) = H2O2 + O2. In terms of biological role, destroys radicals which are normally produced within the cells and which are toxic to biological systems. The sequence is that of Superoxide dismutase [Cu-Zn] 1 (sodC1) from Aquifex aeolicus (strain VF5).